The chain runs to 139 residues: Invertebrate-type lysozyme 2 (139 aa).

The first 18 residues, 1–18, serve as a signal peptide directing secretion; the sequence is MFVKAILLLSIAVAYASA. Residues 19–138 form the I-type lysozyme domain; that stretch reads DCLHCICMRE…WKGVHSCCGC (120 aa). 7 disulfide bridges follow: C20/C106, C23/C138, C25/C31, C36/C45, C58/C86, C76/C82, and C98/C120. E28 (proton donor) is an active-site residue. D39 (nucleophile) is an active-site residue. 51–57 is a binding site for substrate; that stretch reads KIPYYED. Residues Y90 and 113-115 each bind substrate; that span reads HNG.

The protein belongs to the glycosyl hydrolase 22 family. Type-I lysozyme subfamily. Expressed in pharyngeal muscle cell pm3, nerve ring and intestine.

The catalysed reaction is Hydrolysis of (1-&gt;4)-beta-linkages between N-acetylmuramic acid and N-acetyl-D-glucosamine residues in a peptidoglycan and between N-acetyl-D-glucosamine residues in chitodextrins.. Its function is as follows. Has bacteriolytic activity against Gram-positive bacteria. May play a role in resistance to Gram-positive bacterium S.aureus infection. The chain is Invertebrate-type lysozyme 2 from Caenorhabditis elegans.